We begin with the raw amino-acid sequence, 378 residues long: Outer membrane porin C (378 aa).

The first 21 residues, 1 to 21 (MKVKVLSLLVPALLVAGAANA), serve as a signal peptide directing secretion.

Belongs to the Gram-negative porin family. In terms of assembly, homotrimer.

Its subcellular location is the cell outer membrane. In terms of biological role, forms pores that allow passive diffusion of small molecules across the outer membrane. This chain is Outer membrane porin C (ompC), found in Salmonella typhimurium (strain LT2 / SGSC1412 / ATCC 700720).